Consider the following 381-residue polypeptide: Alkanesulfonate monooxygenase (381 aa).

This sequence belongs to the SsuD family. As to quaternary structure, homotetramer.

The enzyme catalyses an alkanesulfonate + FMNH2 + O2 = an aldehyde + FMN + sulfite + H2O + 2 H(+). In terms of biological role, catalyzes the desulfonation of aliphatic sulfonates. This Escherichia coli O1:K1 / APEC protein is Alkanesulfonate monooxygenase.